A 58-amino-acid polypeptide reads, in one-letter code: MAKTVVKKNESLDDALRRFKRTVSKSGTLAEYRKREFYEKPSVRRKLKSEAARKRKKF.

The protein belongs to the bacterial ribosomal protein bS21 family.

The polypeptide is Small ribosomal subunit protein bS21 (Lacticaseibacillus paracasei (strain ATCC 334 / BCRC 17002 / CCUG 31169 / CIP 107868 / KCTC 3260 / NRRL B-441) (Lactobacillus paracasei)).